Consider the following 352-residue polypeptide: Chorismate synthase (352 aa).

Positions 48 and 54 each coordinate NADP(+). FMN-binding positions include Arg-125–Ser-127, Asn-238–Ala-239, Gly-278, Lys-293–Ser-297, and Arg-319.

This sequence belongs to the chorismate synthase family. In terms of assembly, homotetramer. FMNH2 is required as a cofactor.

It catalyses the reaction 5-O-(1-carboxyvinyl)-3-phosphoshikimate = chorismate + phosphate. It participates in metabolic intermediate biosynthesis; chorismate biosynthesis; chorismate from D-erythrose 4-phosphate and phosphoenolpyruvate: step 7/7. Functionally, catalyzes the anti-1,4-elimination of the C-3 phosphate and the C-6 proR hydrogen from 5-enolpyruvylshikimate-3-phosphate (EPSP) to yield chorismate, which is the branch point compound that serves as the starting substrate for the three terminal pathways of aromatic amino acid biosynthesis. This reaction introduces a second double bond into the aromatic ring system. The protein is Chorismate synthase of Bordetella petrii (strain ATCC BAA-461 / DSM 12804 / CCUG 43448).